A 322-amino-acid chain; its full sequence is Ribosomal RNA small subunit methyltransferase H (322 aa).

Residues 47–49 (GGH), aspartate 67, phenylalanine 93, aspartate 112, and glutamine 119 each bind S-adenosyl-L-methionine.

This sequence belongs to the methyltransferase superfamily. RsmH family.

The protein localises to the cytoplasm. The enzyme catalyses cytidine(1402) in 16S rRNA + S-adenosyl-L-methionine = N(4)-methylcytidine(1402) in 16S rRNA + S-adenosyl-L-homocysteine + H(+). Its function is as follows. Specifically methylates the N4 position of cytidine in position 1402 (C1402) of 16S rRNA. This is Ribosomal RNA small subunit methyltransferase H from Stenotrophomonas maltophilia (strain R551-3).